We begin with the raw amino-acid sequence, 365 residues long: Chorismate synthase (365 aa).

Arginine 47 contributes to the NADP(+) binding site. Residues 124–126, glycine 287, 302–306, and arginine 328 contribute to the FMN site; these read RAS and KPTAT.

It belongs to the chorismate synthase family. In terms of assembly, homotetramer. FMNH2 is required as a cofactor.

The enzyme catalyses 5-O-(1-carboxyvinyl)-3-phosphoshikimate = chorismate + phosphate. Its pathway is metabolic intermediate biosynthesis; chorismate biosynthesis; chorismate from D-erythrose 4-phosphate and phosphoenolpyruvate: step 7/7. Functionally, catalyzes the anti-1,4-elimination of the C-3 phosphate and the C-6 proR hydrogen from 5-enolpyruvylshikimate-3-phosphate (EPSP) to yield chorismate, which is the branch point compound that serves as the starting substrate for the three terminal pathways of aromatic amino acid biosynthesis. This reaction introduces a second double bond into the aromatic ring system. The protein is Chorismate synthase of Prochlorococcus marinus (strain MIT 9312).